The following is a 279-amino-acid chain: MPFSGHVPRKRFGQHWLRDDSILEKILLAADLQEEDRILEIGPGRGALTEKLLESNVKLVHGVELDAELIVGLKQRFAGQSRFTLQEGDALSVSLLPHDGIAANKVVANIPYNITGPLLERLIGRLGRSSEVKYQRLVLLVQKEVAKRILALPGQSSFSAMSVRLQLLAKCQSVCEVHPSSFSPQPKVYSEVIILDPLEKDERLDFLVERRVASIVQIAFLSRRKKLRNTLTKICPLDELEPLAYRQGINLNQRPQELAPMIWVQLARELERWDRSKKK.

Positions 15, 17, 42, 64, 89, and 109 each coordinate S-adenosyl-L-methionine.

This sequence belongs to the class I-like SAM-binding methyltransferase superfamily. rRNA adenine N(6)-methyltransferase family. RsmA subfamily.

Its subcellular location is the cytoplasm. It carries out the reaction adenosine(1518)/adenosine(1519) in 16S rRNA + 4 S-adenosyl-L-methionine = N(6)-dimethyladenosine(1518)/N(6)-dimethyladenosine(1519) in 16S rRNA + 4 S-adenosyl-L-homocysteine + 4 H(+). Specifically dimethylates two adjacent adenosines (A1518 and A1519) in the loop of a conserved hairpin near the 3'-end of 16S rRNA in the 30S particle. May play a critical role in biogenesis of 30S subunits. The protein is Ribosomal RNA small subunit methyltransferase A of Prochlorococcus marinus (strain SARG / CCMP1375 / SS120).